Here is a 167-residue protein sequence, read N- to C-terminus: Peptidoglycan L-alanyl-D-glutamate endopeptidase CwlK (167 aa).

Positions 1–26 (MNLPAKTFVILCILFLLDLCFSYIRH) are cleaved as a signal peptide.

Belongs to the peptidase M15C family.

The protein localises to the cell membrane. In terms of biological role, cleaves the linkage of the L-alanine-D-glutamic acid of B.subtilis cell wall. The polypeptide is Peptidoglycan L-alanyl-D-glutamate endopeptidase CwlK (cwlK) (Bacillus subtilis (strain 168)).